An 825-amino-acid chain; its full sequence is BEN domain-containing protein 3 (825 aa).

Residues 1–11 (MNSTEISEDVE) show a composition bias toward acidic residues. The disordered stretch occupies residues 1–35 (MNSTEISEDVEEVLKNNPVKAEGSDATLDCSRNSR). Lysine 20 participates in a covalent cross-link: Glycyl lysine isopeptide (Lys-Gly) (interchain with G-Cter in SUMO); alternate. A Glycyl lysine isopeptide (Lys-Gly) (interchain with G-Cter in SUMO1); alternate cross-link involves residue lysine 20. A Glycyl lysine isopeptide (Lys-Gly) (interchain with G-Cter in SUMO2); alternate cross-link involves residue lysine 20. Glycyl lysine isopeptide (Lys-Gly) (interchain with G-Cter in SUMO2) cross-links involve residues lysine 39, lysine 54, lysine 56, lysine 71, lysine 126, lysine 127, lysine 135, lysine 140, lysine 156, and lysine 174. Residues 52 to 122 (SSKRKQLDSD…EEEPSTEATV (71 aa)) are disordered. Positions 54 to 56 (KRK) match the Nuclear localization signal motif. The BEN 1 domain maps to 239–340 (PPPEYQLTAS…DFFSRFWAQR (102 aa)). Serine 376 carries the phosphoserine modification. Residues 384–484 (ASDHVVDTQD…DELEGLGLEG (101 aa)) enclose the BEN 2 domain. Lysine 424 is covalently cross-linked (Glycyl lysine isopeptide (Lys-Gly) (interchain with G-Cter in SUMO2)). Serine 486 bears the Phosphoserine mark. Lysine 509 is covalently cross-linked (Glycyl lysine isopeptide (Lys-Gly) (interchain with G-Cter in SUMO); alternate). Lysine 509 is covalently cross-linked (Glycyl lysine isopeptide (Lys-Gly) (interchain with G-Cter in SUMO2); alternate). Lysine 525 participates in a covalent cross-link: Glycyl lysine isopeptide (Lys-Gly) (interchain with G-Cter in SUMO2). The BEN 3 domain occupies 547-647 (GSDCLLSKEQ…ERCRRRDTEQ (101 aa)). A Glycyl lysine isopeptide (Lys-Gly) (interchain with G-Cter in SUMO2) cross-link involves residue lysine 697. The BEN 4 domain maps to 712–813 (VPSPYLLSDK…ERCRRPNRKK (102 aa)).

As to quaternary structure, homooligomer, probably a homooctamer. Interacts with HDAC2 and HDAC3, but not HDAC1. Interacts with SALL4. Interacts with SMARCA5/SNF2H, BAZ2A/TIP5 and USP21. Interacts with the nucleosome remodeling and histone deacetylase (NuRD) repressor complex. Interacts (via BEN domains 1 and 3) with ERCC6L (via N-terminal TPR repeat); the interaction is direct. Post-translationally, sumoylated at Lys-20 by SUMO1 and at Lys-509 by SUMO1, SUMO2 and SUMO3. Sumoylation probably occurs sequentially, with that of Lys-20 preceding that of Lys-509. It does not alter association with heterochromatin, but is required for the repression of transcription.

Its subcellular location is the nucleus. It localises to the nucleolus. In terms of biological role, transcriptional repressor which associates with the NoRC (nucleolar remodeling complex) complex and plays a key role in repressing rDNA transcription. The sumoylated form modulates the stability of the NoRC complex component BAZ2A/TIP5 by controlling its USP21-mediated deubiquitination. Binds to unmethylated major satellite DNA and is involved in the recruitment of the Polycomb repressive complex 2 (PRC2) to major satellites. Stimulates the ERCC6L translocase and ATPase activities. The chain is BEN domain-containing protein 3 (Bend3) from Mus musculus (Mouse).